Reading from the N-terminus, the 282-residue chain is Shikimate dehydrogenase (NADP(+)) (282 aa).

Residues 19 to 21 and T66 contribute to the shikimate site; that span reads TQS. The Proton acceptor role is filled by K70. The shikimate site is built by N91 and D107. Residues 132-136, 155-160, I224, and G246 contribute to the NADP(+) site; these read GAGGA and NRTITR.

This sequence belongs to the shikimate dehydrogenase family. Homodimer.

The enzyme catalyses shikimate + NADP(+) = 3-dehydroshikimate + NADPH + H(+). The protein operates within metabolic intermediate biosynthesis; chorismate biosynthesis; chorismate from D-erythrose 4-phosphate and phosphoenolpyruvate: step 4/7. In terms of biological role, involved in the biosynthesis of the chorismate, which leads to the biosynthesis of aromatic amino acids. Catalyzes the reversible NADPH linked reduction of 3-dehydroshikimate (DHSA) to yield shikimate (SA). The sequence is that of Shikimate dehydrogenase (NADP(+)) from Buchnera aphidicola subsp. Baizongia pistaciae (strain Bp).